A 630-amino-acid chain; its full sequence is tRNA uridine 5-carboxymethylaminomethyl modification enzyme MnmG (630 aa).

13-18 contacts FAD; it reads GGGHAG. Position 273-287 (273-287) interacts with NAD(+); that stretch reads GPRYCPSIEDKIHRF.

Belongs to the MnmG family. In terms of assembly, homodimer. Heterotetramer of two MnmE and two MnmG subunits. It depends on FAD as a cofactor.

The protein localises to the cytoplasm. NAD-binding protein involved in the addition of a carboxymethylaminomethyl (cmnm) group at the wobble position (U34) of certain tRNAs, forming tRNA-cmnm(5)s(2)U34. The protein is tRNA uridine 5-carboxymethylaminomethyl modification enzyme MnmG of Pseudomonas putida (Arthrobacter siderocapsulatus).